Reading from the N-terminus, the 205-residue chain is Urease accessory protein UreG (205 aa).

14–21 provides a ligand contact to GTP; it reads GPVGSGKT.

This sequence belongs to the SIMIBI class G3E GTPase family. UreG subfamily. In terms of assembly, homodimer. UreD, UreF and UreG form a complex that acts as a GTP-hydrolysis-dependent molecular chaperone, activating the urease apoprotein by helping to assemble the nickel containing metallocenter of UreC. The UreE protein probably delivers the nickel.

Its subcellular location is the cytoplasm. In terms of biological role, facilitates the functional incorporation of the urease nickel metallocenter. This process requires GTP hydrolysis, probably effectuated by UreG. This is Urease accessory protein UreG from Escherichia coli O157:H7.